We begin with the raw amino-acid sequence, 242 residues long: tRNA pseudouridine synthase A (242 aa).

Catalysis depends on aspartate 51, which acts as the Nucleophile. A substrate-binding site is contributed by tyrosine 107.

This sequence belongs to the tRNA pseudouridine synthase TruA family. Homodimer.

The catalysed reaction is uridine(38/39/40) in tRNA = pseudouridine(38/39/40) in tRNA. In terms of biological role, formation of pseudouridine at positions 38, 39 and 40 in the anticodon stem and loop of transfer RNAs. The protein is tRNA pseudouridine synthase A of Helicobacter pylori (strain Shi470).